The primary structure comprises 235 residues: Small ribosomal subunit protein eS4 (235 aa).

The region spanning 37-110 is the S4 RNA-binding domain; it reads LPLGLIIRDV…KGRLVLYKLN (74 aa).

Belongs to the eukaryotic ribosomal protein eS4 family.

The chain is Small ribosomal subunit protein eS4 from Methanosarcina mazei (strain ATCC BAA-159 / DSM 3647 / Goe1 / Go1 / JCM 11833 / OCM 88) (Methanosarcina frisia).